The following is a 224-amino-acid chain: Non-structural protein V (224 aa).

Residues 55–65 (KNIQYPTTSHQ) show a composition bias toward polar residues. Disordered regions lie at residues 55-90 (KNIQ…GTGG) and 145-172 (TSTP…GHRR). Residues histidine 170, cysteine 189, cysteine 193, cysteine 205, cysteine 207, cysteine 210, cysteine 214, and cysteine 217 each contribute to the Zn(2+) site.

It belongs to the paramyxoviruses V protein family. Interacts with host IFIH1/MDA5 and DHX58/LGP2. Forms with host DDB1, CUL4A, STAT1, STAT2 and STAT3 the mumps virus V-dependent complex (VDC).

It is found in the virion. The protein localises to the host cytoplasm. Its function is as follows. Plays an essential role in the inhibition of host immune response. Prevents the establishment of cellular antiviral state by blocking interferon-alpha/beta (IFN-alpha/beta) production and signaling pathway. Interacts with host IFIH1/MDA5 and DHX58/LGP2 to inhibit the transduction pathway involved in the activation of IFN-beta promoter, thus protecting the virus against cell antiviral state. Blocks the type I and II interferon signaling pathways by interacting with host STAT1, STAT2 and STAT3, and mediating their ubiquitination and subsequent proteasomal degradation. This chain is Non-structural protein V, found in Mumps virus genotype B (strain Miyahara vaccine) (MuV).